The primary structure comprises 263 residues: Translation initiation factor 2 subunit alpha (263 aa).

Residues 12–83 (GEILIATVKQ…RKGTIDVSLK (72 aa)) form the S1 motif domain.

Belongs to the eIF-2-alpha family. As to quaternary structure, heterotrimer composed of an alpha, a beta and a gamma chain.

Functionally, eIF-2 functions in the early steps of protein synthesis by forming a ternary complex with GTP and initiator tRNA. This Sulfurisphaera tokodaii (strain DSM 16993 / JCM 10545 / NBRC 100140 / 7) (Sulfolobus tokodaii) protein is Translation initiation factor 2 subunit alpha.